We begin with the raw amino-acid sequence, 254 residues long: Kallikrein-4 (254 aa).

A signal peptide spans 1 to 26 (MATAGNPWGWFLGYLILGVAGSLVSG). Positions 27–30 (SCSQ) are excised as a propeptide. The 222-residue stretch at 31–252 (IINGEDCSPH…FTEWIEKTVQ (222 aa)) folds into the Peptidase S1 domain. Intrachain disulfides connect Cys-37-Cys-167, Cys-56-Cys-72, Cys-141-Cys-241, Cys-148-Cys-213, Cys-178-Cys-192, and Cys-203-Cys-228. His-40 provides a ligand contact to Zn(2+). His-71 functions as the Charge relay system in the catalytic mechanism. Glu-91 contacts Zn(2+). Residue Asp-116 is the Charge relay system of the active site. N-linked (GlcNAc...) asparagine glycosylation occurs at Asn-169. Residue Ser-207 is the Charge relay system of the active site.

It belongs to the peptidase S1 family. Kallikrein subfamily. In terms of processing, N-glycosylated. The N-glycan structures are of complex diantennary or triantennary type, which may be further modified with up to 2 sialic acid residues. Expressed in prostate.

It is found in the secreted. Functionally, has a major role in enamel formation. Required during the maturation stage of tooth development for clearance of enamel proteins and normal structural patterning of the crystalline matrix. The protein is Kallikrein-4 (KLK4) of Homo sapiens (Human).